The primary structure comprises 184 residues: MSWRSEYIWVEFIAGSRKPGNFFWAFILFLGSLGFLVVGISSYLDRNLLSLFPSQQINFFPQGIVMSFYGIAGLFISSYLWCTIIWNVGSGYDRFDTKEGIVCIFRWGFPGKNRRIFLRFLMKDIQSIRIEVKEGIYARRVLYIESRGLGAIPLNRTDENLTPREIEQKAAELAYFLRVPIEGF.

2 helical membrane-spanning segments follow: residues 20 to 40 (GNFFWAFILFLGSLGFLVVGI) and 64 to 84 (IVMSFYGIAGLFISSYLWCTI).

It belongs to the Ycf4 family.

The protein localises to the plastid. It localises to the chloroplast thylakoid membrane. Seems to be required for the assembly of the photosystem I complex. The chain is Photosystem I assembly protein Ycf4 from Citrus sinensis (Sweet orange).